Consider the following 1070-residue polypeptide: Potassium/chloride cotransporter 3 (1070 aa).

15 helical membrane-spanning segments follow: residues 92–112, 114–134, 142–162, 174–194, 196–216, 228–248, 251–271, 400–420, 433–453, 473–493, 534–554, 557–577, 600–620, 791–811, and 827–847; these read GVML…TMFI, LFWV…AICC, ISLS…YFII, VGIL…VGGV, VILM…LHDT, LYGT…VKFV, LAPV…GGGI, FFML…GTNM, VGTI…AILF, TMVV…GAFL, PFLG…LGAV, IAEV…LIAV, LLGA…LACI, LVLF…LIVT, and FIDI…AYLL.

As to expression, expressed in the amphid sheath glia and the cephalic sheath glia. Also expressed in the inner labial and outer labial sheath and socket glia and as well as phasmid sheath glia.

It is found in the cell membrane. In terms of biological role, probable potassium/chloride cotransporter that functions in the amphid sheath glial cells to regulate thermotaxis behavior. By maintaining chloride homeostasis, negatively regulates guanylate cyclase gcy-8 in the thermosensory AFD neurons and thereby controls the microvilli receptive ending morphology of the AFD neurons and thermotaxis. Modulates the temperature-evoked neuronal activity of the AFD neurons such as calcium responses to temperature gradients. Might also play a role in the chemotaxis behavior mediated by the sensory neurons AWA and AWC. This Caenorhabditis elegans protein is Potassium/chloride cotransporter 3 (kcc-3).